The chain runs to 119 residues: MRPVDADEAREPREEPGSPLSPAPRAGRENLASLERERARAHWRARRKLLEIQSLLDAIKSEVEAEERGARAPAPRPRAEAEERVARLCAEAERKAAEAARMGRRIVELHQRIAGCECC.

Basic and acidic residues predominate over residues 1–16; the sequence is MRPVDADEAREPREEP. Residues 1–36 form a disordered region; the sequence is MRPVDADEAREPREEPGSPLSPAPRAGRENLASLER.

Belongs to the MORF4 family-associated protein family. As to quaternary structure, may interact with CDK2AP1.

Its function is as follows. May play a role in cell proliferation. This chain is MORF4 family associated protein 1 like 2, found in Homo sapiens (Human).